The following is a 160-amino-acid chain: Cytochrome b6-f complex subunit 4 (160 aa).

3 helical membrane passes run 36–56 (LLYIFPVCILGTIACCIGLGV), 95–115 (LLGVLSMAAVPIGLITVPFIE), and 131–151 (LVFLFGTFTAFWLGIGATMPI).

Belongs to the cytochrome b family. PetD subfamily. The 4 large subunits of the cytochrome b6-f complex are cytochrome b6, subunit IV (17 kDa polypeptide, petD), cytochrome f and the Rieske protein, while the 4 small subunits are petG, petL, petM and petN. The complex functions as a dimer.

It is found in the plastid. The protein localises to the chloroplast thylakoid membrane. Component of the cytochrome b6-f complex, which mediates electron transfer between photosystem II (PSII) and photosystem I (PSI), cyclic electron flow around PSI, and state transitions. The sequence is that of Cytochrome b6-f complex subunit 4 from Emiliania huxleyi (Coccolithophore).